The primary structure comprises 120 residues: NAD(P)H-quinone oxidoreductase subunit 3 (120 aa).

The next 3 membrane-spanning stretches (helical) occupy residues 10–30 (FLGF…TNLI), 64–84 (MFAL…PWAV), and 89–109 (LGLL…IALA).

The protein belongs to the complex I subunit 3 family. In terms of assembly, NDH-1 can be composed of about 15 different subunits; different subcomplexes with different compositions have been identified which probably have different functions.

Its subcellular location is the cellular thylakoid membrane. It catalyses the reaction a plastoquinone + NADH + (n+1) H(+)(in) = a plastoquinol + NAD(+) + n H(+)(out). The enzyme catalyses a plastoquinone + NADPH + (n+1) H(+)(in) = a plastoquinol + NADP(+) + n H(+)(out). Its function is as follows. NDH-1 shuttles electrons from an unknown electron donor, via FMN and iron-sulfur (Fe-S) centers, to quinones in the respiratory and/or the photosynthetic chain. The immediate electron acceptor for the enzyme in this species is believed to be plastoquinone. Couples the redox reaction to proton translocation, and thus conserves the redox energy in a proton gradient. Cyanobacterial NDH-1 also plays a role in inorganic carbon-concentration. This chain is NAD(P)H-quinone oxidoreductase subunit 3, found in Prochlorococcus marinus (strain MIT 9312).